The following is a 342-amino-acid chain: Methionine import ATP-binding protein MetN 2 (342 aa).

The region spanning 2–241 (ISIEGLSKVF…PKQLVTRKFV (240 aa)) is the ABC transporter domain. An ATP-binding site is contributed by 38–45 (GYSGAGKS).

It belongs to the ABC transporter superfamily. Methionine importer (TC 3.A.1.24) family. As to quaternary structure, the complex is composed of two ATP-binding proteins (MetN), two transmembrane proteins (MetI) and a solute-binding protein (MetQ).

Its subcellular location is the cell membrane. The enzyme catalyses L-methionine(out) + ATP + H2O = L-methionine(in) + ADP + phosphate + H(+). It catalyses the reaction D-methionine(out) + ATP + H2O = D-methionine(in) + ADP + phosphate + H(+). Functionally, part of the ABC transporter complex MetNIQ involved in methionine import. Responsible for energy coupling to the transport system. The sequence is that of Methionine import ATP-binding protein MetN 2 from Oceanobacillus iheyensis (strain DSM 14371 / CIP 107618 / JCM 11309 / KCTC 3954 / HTE831).